Reading from the N-terminus, the 200-residue chain is Mediator of RNA polymerase II transcription subunit 29 (200 aa).

2 stretches are compositionally biased toward low complexity: residues 1–21 (MAASQQQASAASSAAGVSGPS) and 36–48 (AQLVGPAQSGLLQ). Positions 1–48 (MAASQQQASAASSAAGVSGPSSAGGPGPQQQPQPPAQLVGPAQSGLLQ) are disordered. Ala2 is subject to N-acetylalanine.

The protein belongs to the Mediator complex subunit 29 family. Component of the Mediator complex, which is composed of MED1, MED4, MED6, MED7, MED8, MED9, MED10, MED11, MED12, MED13, MED13L, MED14, MED15, MED16, MED17, MED18, MED19, MED20, MED21, MED22, MED23, MED24, MED25, MED26, MED27, MED29, MED30, MED31, CCNC, CDK8 and CDC2L6/CDK11. The MED12, MED13, CCNC and CDK8 subunits form a distinct module termed the CDK8 module. Mediator containing the CDK8 module is less active than Mediator lacking this module in supporting transcriptional activation. Individual preparations of the Mediator complex lacking one or more distinct subunits have been variously termed ARC, CRSP, DRIP, PC2, SMCC and TRAP. Associates with the MED18/MED20 heteromer.

It localises to the nucleus. Functionally, component of the Mediator complex, a coactivator involved in the regulated transcription of nearly all RNA polymerase II-dependent genes. Mediator functions as a bridge to convey information from gene-specific regulatory proteins to the basal RNA polymerase II transcription machinery. Mediator is recruited to promoters by direct interactions with regulatory proteins and serves as a scaffold for the assembly of a functional preinitiation complex with RNA polymerase II and the general transcription factors. In Pongo abelii (Sumatran orangutan), this protein is Mediator of RNA polymerase II transcription subunit 29 (MED29).